The sequence spans 233 residues: uncharacterized protein (233 aa).

It belongs to the asfivirus H233R family.

This is an uncharacterized protein from African swine fever virus (isolate Tick/Malawi/Lil 20-1/1983) (ASFV).